Reading from the N-terminus, the 488-residue chain is (Z)-2-((N-methylformamido)methylene)-5-hydroxybutyrolactone dehydrogenase (488 aa).

Residues 149 to 150 and 226 to 227 contribute to the NAD(+) site; these read WN and GG. Residue Glu248 is the Proton acceptor of the active site. Residue Leu249 coordinates NAD(+). Cys282 acts as the Nucleophile in catalysis. Glu380 contacts NAD(+).

The protein belongs to the aldehyde dehydrogenase family. As to quaternary structure, homodimer.

It catalyses the reaction (Z)-2-((N-methylformamido)methylene)-5-hydroxybutanolactone + NAD(+) + H2O = (E)-2-((N-methylformamido) methylene)succinate + NADH + 3 H(+). In terms of biological role, involved in the degradation of the pyridine ring of trigonelline (TG; N-methylnicotinate) into succinate and methylamine as carbon and nitrogen sources, respectively. Catalyzes the NAD(+)-dependent oxidation of (Z)-2-((N-methylformamido)methylene)-5-hydroxybutyrolactone (MFMB) to yield (E)-2-((N-methylformamido)methylene)succinate (MFMS). The chain is (Z)-2-((N-methylformamido)methylene)-5-hydroxybutyrolactone dehydrogenase from Acinetobacter baylyi (strain ATCC 33305 / BD413 / ADP1).